The chain runs to 252 residues: Small ribosomal subunit protein uS3 (252 aa).

Positions 39-111 (IRKLINNFAK…DVNLNVLEVK (73 aa)) constitute a KH type-2 domain. The tract at residues 226–252 (SQSSNNPNRRPRNFKGGNNNHVNAKKN) is disordered.

The protein belongs to the universal ribosomal protein uS3 family. In terms of assembly, part of the 30S ribosomal subunit. Forms a tight complex with proteins S10 and S14.

Functionally, binds the lower part of the 30S subunit head. Binds mRNA in the 70S ribosome, positioning it for translation. This Aster yellows witches'-broom phytoplasma (strain AYWB) protein is Small ribosomal subunit protein uS3.